The chain runs to 207 residues: GTP-binding protein Rheb homolog 1 (207 aa).

8 residues coordinate GTP: Gly-25, Lys-26, Ser-27, Tyr-42, Thr-45, Asn-126, Asp-129, and Ala-157. Ser-27 provides a ligand contact to Mg(2+). The Effector region motif lies at 42 to 50 (YESTIEDQH). Thr-45 serves as a coordination point for Mg(2+). The segment covering 180-193 (NLSPTERPNGNSPK) has biased composition (polar residues). Residues 180 to 207 (NLSPTERPNGNSPKRNPFKDDGKPCSIS) form a disordered region. Over residues 196–207 (PFKDDGKPCSIS) the composition is skewed to basic and acidic residues. Cysteine methyl ester is present on Cys-204. The S-farnesyl cysteine moiety is linked to residue Cys-204. Positions 205-207 (SIS) are cleaved as a propeptide — removed in mature form.

It belongs to the small GTPase superfamily. Rheb family.

It is found in the cell membrane. It carries out the reaction GTP + H2O = GDP + phosphate + H(+). In terms of biological role, binds GTP and exhibits intrinsic GTPase activity. The polypeptide is GTP-binding protein Rheb homolog 1 (rheb-1) (Caenorhabditis elegans).